Reading from the N-terminus, the 188-residue chain is ATP synthase subunit b (188 aa).

A helical transmembrane segment spans residues 21 to 41; that stretch reads ILPHLGELIVGIIFAIIIYAV.

The protein belongs to the ATPase B chain family. F-type ATPases have 2 components, F(1) - the catalytic core - and F(0) - the membrane proton channel. F(1) has five subunits: alpha(3), beta(3), gamma(1), delta(1), epsilon(1). F(0) has three main subunits: a(1), b(2) and c(10-14). The alpha and beta chains form an alternating ring which encloses part of the gamma chain. F(1) is attached to F(0) by a central stalk formed by the gamma and epsilon chains, while a peripheral stalk is formed by the delta and b chains.

The protein localises to the cell membrane. F(1)F(0) ATP synthase produces ATP from ADP in the presence of a proton or sodium gradient. F-type ATPases consist of two structural domains, F(1) containing the extramembraneous catalytic core and F(0) containing the membrane proton channel, linked together by a central stalk and a peripheral stalk. During catalysis, ATP synthesis in the catalytic domain of F(1) is coupled via a rotary mechanism of the central stalk subunits to proton translocation. Functionally, component of the F(0) channel, it forms part of the peripheral stalk, linking F(1) to F(0). This is ATP synthase subunit b from Kineococcus radiotolerans (strain ATCC BAA-149 / DSM 14245 / SRS30216).